The chain runs to 736 residues: Eukaryotic translation initiation factor 3 subunit B (736 aa).

The sufficient for interaction with HCR1 and TIF32 stretch occupies residues 1 to 94 (MAAVFDDIRL…LFIEFEDAGA (94 aa)). Residues 1-219 (MAAVFDDIRL…GIASWGGPQF (219 aa)) are sufficient for interaction with PIC8. The 84-residue stretch at 37 to 120 (RYVVVDGAPV…HRLWVNGLDD (84 aa)) folds into the RRM domain. WD repeat units follow at residues 140–182 (EFEA…PENV), 186–224 (RRNWSNSILNFSPHGTYLFSFHDQGIASWGGPQFKRLRR), 226–244 (AHPDVKAISMSSTEKYLVT), 245–284 (FSSEPLEVSDEPNEACPFGPESRGHQLCIWDVATGVCVKT), 288–328 (PPQQ…QLLG), 332–375 (MKIE…QSCK), 443–483 (EIKD…VSFY), 511–557 (AIDG…TEKI), 566–604 (ATLRDVAHINYASATDYEWDPSGRYLAFWSSAWKHKAEN), and 616–662 (VREE…QDAM).

This sequence belongs to the eIF-3 subunit B family. In terms of assembly, component of the eukaryotic translation initiation factor 3 (eIF-3) complex.

The protein resides in the cytoplasm. Its function is as follows. RNA-binding component of the eukaryotic translation initiation factor 3 (eIF-3) complex, which is involved in protein synthesis of a specialized repertoire of mRNAs and, together with other initiation factors, stimulates binding of mRNA and methionyl-tRNAi to the 40S ribosome. The eIF-3 complex specifically targets and initiates translation of a subset of mRNAs involved in cell proliferation. This is Eukaryotic translation initiation factor 3 subunit B from Eremothecium gossypii (strain ATCC 10895 / CBS 109.51 / FGSC 9923 / NRRL Y-1056) (Yeast).